A 202-amino-acid chain; its full sequence is Small ribosomal subunit protein uS4 (202 aa).

The tract at residues 21-42 is disordered; it reads LSRKSPRRAYPPGQHGQARRKR. One can recognise an S4 RNA-binding domain in the interval 90-152; the sequence is MRLDNTVFRL…DRSRKLVETN (63 aa).

This sequence belongs to the universal ribosomal protein uS4 family. In terms of assembly, part of the 30S ribosomal subunit. Contacts protein S5. The interaction surface between S4 and S5 is involved in control of translational fidelity.

Functionally, one of the primary rRNA binding proteins, it binds directly to 16S rRNA where it nucleates assembly of the body of the 30S subunit. With S5 and S12 plays an important role in translational accuracy. This chain is Small ribosomal subunit protein uS4, found in Synechocystis sp. (strain ATCC 27184 / PCC 6803 / Kazusa).